Here is a 310-residue protein sequence, read N- to C-terminus: HPr kinase/phosphorylase (310 aa).

Active-site residues include H138 and K159. Residue G153–S160 participates in ATP binding. S160 contacts Mg(2+). The active-site Proton acceptor; for phosphorylation activity. Proton donor; for dephosphorylation activity is the D177. The segment at L201–D210 is important for the catalytic mechanism of both phosphorylation and dephosphorylation. Position 202 (E202) interacts with Mg(2+). The active site involves R243. The important for the catalytic mechanism of dephosphorylation stretch occupies residues P264–R269.

This sequence belongs to the HPrK/P family. In terms of assembly, homohexamer. It depends on Mg(2+) as a cofactor.

It carries out the reaction [HPr protein]-L-serine + ATP = [HPr protein]-O-phospho-L-serine + ADP + H(+). The enzyme catalyses [HPr protein]-O-phospho-L-serine + phosphate + H(+) = [HPr protein]-L-serine + diphosphate. In terms of biological role, catalyzes the ATP- as well as the pyrophosphate-dependent phosphorylation of a specific serine residue in HPr, a phosphocarrier protein of the phosphoenolpyruvate-dependent sugar phosphotransferase system (PTS). HprK/P also catalyzes the pyrophosphate-producing, inorganic phosphate-dependent dephosphorylation (phosphorolysis) of seryl-phosphorylated HPr (P-Ser-HPr). The two antagonistic activities of HprK/P are regulated by several intracellular metabolites, which change their concentration in response to the absence or presence of rapidly metabolisable carbon sources (glucose, fructose, etc.) in the growth medium. Therefore, by controlling the phosphorylation state of HPr, HPrK/P is a sensor enzyme that plays a major role in the regulation of carbon metabolism and sugar transport: it mediates carbon catabolite repression (CCR), and regulates PTS-catalyzed carbohydrate uptake and inducer exclusion. In Streptococcus equi subsp. equi (strain 4047), this protein is HPr kinase/phosphorylase.